Consider the following 166-residue polypeptide: MKYTSYILAFQLCIVLGSLGCYCQDPYVKEAENLKKYFNAGHSDVADNGTLFLGILKNWKEESDRKIMQSQIVSFYFKLFKNFKDDQSIQKSVETIKEDMNVKFFNSNKKKRDDFEKLTNYSVTDLNVQRKAIHELIQVMAELSPAAKTGKRKRSQMLFRGRRASQ.

The first 23 residues, 1-23, serve as a signal peptide directing secretion; sequence MKYTSYILAFQLCIVLGSLGCYC. A Pyrrolidone carboxylic acid modification is found at glutamine 24. The N-linked (GlcNAc...) asparagine glycan is linked to asparagine 48. The N-linked (GlcNAc...) asparagine; in dimeric form glycan is linked to asparagine 120. A disordered region spans residues 147-166; that stretch reads AKTGKRKRSQMLFRGRRASQ. The span at 149 to 166 shows a compositional bias: basic residues; that stretch reads TGKRKRSQMLFRGRRASQ. A propeptide spanning residues 162–166 is cleaved from the precursor; that stretch reads RRASQ.

It belongs to the type II (or gamma) interferon family. In terms of assembly, homodimer. Interacts with IFNGR1 (via extracellular domain); this interaction promotes IFNGR1 dimerization. Proteolytic processing produces C-terminal heterogeneity, with proteins ending alternatively at Gly-150, Met-157 or Gly-161. As to expression, released primarily from activated T lymphocytes.

Its subcellular location is the secreted. Its function is as follows. Type II interferon produced by immune cells such as T-cells and NK cells that plays crucial roles in antimicrobial, antiviral, and antitumor responses by activating effector immune cells and enhancing antigen presentation. Primarily signals through the JAK-STAT pathway after interaction with its receptor IFNGR1 to affect gene regulation. Upon IFNG binding, IFNGR1 intracellular domain opens out to allow association of downstream signaling components JAK2, JAK1 and STAT1, leading to STAT1 activation, nuclear translocation and transcription of IFNG-regulated genes. Many of the induced genes are transcription factors such as IRF1 that are able to further drive regulation of a next wave of transcription. Plays a role in class I antigen presentation pathway by inducing a replacement of catalytic proteasome subunits with immunoproteasome subunits. In turn, increases the quantity, quality, and repertoire of peptides for class I MHC loading. Increases the efficiency of peptide generation also by inducing the expression of activator PA28 that associates with the proteasome and alters its proteolytic cleavage preference. Up-regulates as well MHC II complexes on the cell surface by promoting expression of several key molecules such as cathepsins B/CTSB, H/CTSH, and L/CTSL. Participates in the regulation of hematopoietic stem cells during development and under homeostatic conditions by affecting their development, quiescence, and differentiation. The protein is Interferon gamma (IFNG) of Homo sapiens (Human).